The sequence spans 749 residues: 5-methyltetrahydropteroyltriglutamate--homocysteine methyltransferase (749 aa).

5-methyltetrahydropteroyltri-L-glutamate-binding positions include 15–18 (RELK) and K114. L-homocysteine contacts are provided by residues 425-427 (IGS) and E478. L-methionine contacts are provided by residues 425 to 427 (IGS) and E478. W555 lines the 5-methyltetrahydropteroyltri-L-glutamate pocket. D593 is an L-homocysteine binding site. D593 provides a ligand contact to L-methionine. E599 lines the 5-methyltetrahydropteroyltri-L-glutamate pocket. 3 residues coordinate Zn(2+): H636, C638, and E660. H689 acts as the Proton donor in catalysis. Position 721 (C721) interacts with Zn(2+).

The protein belongs to the vitamin-B12 independent methionine synthase family. The cofactor is Zn(2+).

The catalysed reaction is 5-methyltetrahydropteroyltri-L-glutamate + L-homocysteine = tetrahydropteroyltri-L-glutamate + L-methionine. Its pathway is amino-acid biosynthesis; L-methionine biosynthesis via de novo pathway; L-methionine from L-homocysteine (MetE route): step 1/1. Its function is as follows. Catalyzes the transfer of a methyl group from 5-methyltetrahydrofolate to homocysteine resulting in methionine formation. This is 5-methyltetrahydropteroyltriglutamate--homocysteine methyltransferase from Streptococcus pneumoniae serotype 4 (strain ATCC BAA-334 / TIGR4).